The following is a 140-amino-acid chain: FLYWCH family member 2 (140 aa).

2 disordered regions span residues 1-39 and 83-140; these read MPLPEPSEQEGESVKAGQEPSSKPGTEVVPAAPRKPREF and THPE…GKSL. S21 bears the Phosphoserine mark. Residues 98-114 are compositionally biased toward basic and acidic residues; the sequence is PEQKRSRQDPGADRTED. Positions 118–127 are enriched in low complexity; that stretch reads AAGPPEAAGE.

The polypeptide is FLYWCH family member 2 (FLYWCH2) (Pongo abelii (Sumatran orangutan)).